A 964-amino-acid chain; its full sequence is Syndetin (964 aa).

N-acetylmethionine is present on Met1. The disordered stretch occupies residues 1-25 (MQKIKSLMTRQGLKSPPESLNDLGA). The residue at position 15 (Ser15) is a Phosphoserine. Coiled coils occupy residues 81 to 107 (LNLQELEEYRDKLKQQQSAVSKKVADL) and 216 to 244 (YSCISELNSKLQDTLEQIEEQLDVALSKI). Phosphoserine occurs at positions 494, 498, 559, and 561. Residues 532-563 (DEETEDVLASNGYESDEQEKSAYQDYDSDSDV) form a disordered region. Residue Lys963 forms a Glycyl lysine isopeptide (Lys-Gly) (interchain with G-Cter in SUMO1); alternate linkage. A Glycyl lysine isopeptide (Lys-Gly) (interchain with G-Cter in SUMO2); alternate cross-link involves residue Lys963.

It belongs to the syndetin family. Component of the endosome-associated retrograde protein (EARP) complex, composed of VPS51, VPS52, VPS53 and VPS50/Syndetin. The EARP complex interacts with EIPR1. Interacts with VPS51 and VPS53 in an EIPR1-independent manner.

Its subcellular location is the recycling endosome. It is found in the membrane. Its function is as follows. Acts as a component of the EARP complex that is involved in endocytic recycling. The EARP complex associates with Rab4-positive endosomes and promotes recycling of internalized transferrin receptor (TFRC) to the plasma membrane. Within the EARP complex, required to tether the complex to recycling endosomes. Not involved in retrograde transport from early and late endosomes to the trans-Golgi network (TGN). The chain is Syndetin from Mus musculus (Mouse).